The primary structure comprises 290 residues: ATP synthase gamma chain (290 aa).

Belongs to the ATPase gamma chain family. F-type ATPases have 2 components, CF(1) - the catalytic core - and CF(0) - the membrane proton channel. CF(1) has five subunits: alpha(3), beta(3), gamma(1), delta(1), epsilon(1). CF(0) has three main subunits: a, b and c.

It is found in the cell inner membrane. In terms of biological role, produces ATP from ADP in the presence of a proton gradient across the membrane. The gamma chain is believed to be important in regulating ATPase activity and the flow of protons through the CF(0) complex. This is ATP synthase gamma chain from Dictyoglomus turgidum (strain DSM 6724 / Z-1310).